Here is a 598-residue protein sequence, read N- to C-terminus: Beta-fructofuranosidase, insoluble isoenzyme 2 (598 aa).

An N-terminal signal peptide occupies residues 1–25 (MGVLGSRVAWAWLVQLLLLQQLAGA). Aspartate 69 is a catalytic residue. N-linked (GlcNAc...) asparagine glycans are attached at residues asparagine 164, asparagine 189, and asparagine 348.

The protein belongs to the glycosyl hydrolase 32 family.

The protein localises to the secreted. It is found in the extracellular space. The protein resides in the apoplast. It localises to the cell wall. The enzyme catalyses Hydrolysis of terminal non-reducing beta-D-fructofuranoside residues in beta-D-fructofuranosides.. Functionally, may play a role in sucrose partitioning during seed development. The protein is Beta-fructofuranosidase, insoluble isoenzyme 2 (CIN2) of Oryza sativa subsp. indica (Rice).